Consider the following 288-residue polypeptide: 4-hydroxybenzoate octaprenyltransferase (288 aa).

The next 7 membrane-spanning stretches (helical) occupy residues 38–58 (IAAQSIPSLHILIVFTAGVFL), 98–120 (ILFASLVGLSFLLVLTLNSMTIW), 141–161 (LLQVVLGAAFGWSIPMGFSAV), 163–183 (ESLPLVCWVLFLVNILWSVIY), 213–233 (LIIGILQIVMIVLLVLVGSLA), 238–258 (VYYIALSLSALLFIYQQKLMV), and 268–288 (AFLNNNYVGLILFIGIFLSYL).

This sequence belongs to the UbiA prenyltransferase family. The cofactor is Mg(2+).

It localises to the cell inner membrane. The enzyme catalyses all-trans-octaprenyl diphosphate + 4-hydroxybenzoate = 4-hydroxy-3-(all-trans-octaprenyl)benzoate + diphosphate. It participates in cofactor biosynthesis; ubiquinone biosynthesis. In terms of biological role, catalyzes the prenylation of para-hydroxybenzoate (PHB) with an all-trans polyprenyl group. Mediates the second step in the final reaction sequence of ubiquinone-8 (UQ-8) biosynthesis, which is the condensation of the polyisoprenoid side chain with PHB, generating the first membrane-bound Q intermediate 3-octaprenyl-4-hydroxybenzoate. The sequence is that of 4-hydroxybenzoate octaprenyltransferase from Providencia stuartii.